We begin with the raw amino-acid sequence, 189 residues long: Peptidyl-tRNA hydrolase (189 aa).

TRNA is bound at residue Tyr-18. Catalysis depends on His-23, which acts as the Proton acceptor. TRNA-binding residues include Phe-67, Asn-69, and Asn-115.

Belongs to the PTH family. As to quaternary structure, monomer.

It is found in the cytoplasm. It carries out the reaction an N-acyl-L-alpha-aminoacyl-tRNA + H2O = an N-acyl-L-amino acid + a tRNA + H(+). Functionally, hydrolyzes ribosome-free peptidyl-tRNAs (with 1 or more amino acids incorporated), which drop off the ribosome during protein synthesis, or as a result of ribosome stalling. Its function is as follows. Catalyzes the release of premature peptidyl moieties from peptidyl-tRNA molecules trapped in stalled 50S ribosomal subunits, and thus maintains levels of free tRNAs and 50S ribosomes. The chain is Peptidyl-tRNA hydrolase from Leptospira borgpetersenii serovar Hardjo-bovis (strain JB197).